Here is a 540-residue protein sequence, read N- to C-terminus: Chaperonin GroEL (540 aa).

Residues 29–32 (TLGP), 86–90 (DGTTT), Gly413, 476–478 (NAA), and Asp492 each bind ATP.

This sequence belongs to the chaperonin (HSP60) family. In terms of assembly, forms a cylinder of 14 subunits composed of two heptameric rings stacked back-to-back. Interacts with the co-chaperonin GroES.

It localises to the cytoplasm. It catalyses the reaction ATP + H2O + a folded polypeptide = ADP + phosphate + an unfolded polypeptide.. In terms of biological role, together with its co-chaperonin GroES, plays an essential role in assisting protein folding. The GroEL-GroES system forms a nano-cage that allows encapsulation of the non-native substrate proteins and provides a physical environment optimized to promote and accelerate protein folding. This chain is Chaperonin GroEL, found in Streptococcus agalactiae serotype V (strain ATCC BAA-611 / 2603 V/R).